The sequence spans 252 residues: Ubiquinone biosynthesis protein COQ4 homolog 1, mitochondrial (252 aa).

H130, D131, H134, and E146 together coordinate Zn(2+).

Belongs to the COQ4 family. Component of a multi-subunit COQ enzyme complex. The cofactor is Zn(2+).

The protein resides in the mitochondrion inner membrane. The enzyme catalyses a 4-hydroxy-3-methoxy-5-(all-trans-polyprenyl)benzoate + H(+) = a 2-methoxy-6-(all-trans-polyprenyl)phenol + CO2. It functions in the pathway cofactor biosynthesis; ubiquinone biosynthesis. Its function is as follows. Lyase that catalyzes the C1-decarboxylation of 4-hydroxy-3-methoxy-5-(all-trans-polyprenyl)benzoic acid into 2-methoxy-6-(all-trans-polyprenyl)phenol during ubiquinone biosynthesis. The polypeptide is Ubiquinone biosynthesis protein COQ4 homolog 1, mitochondrial (Trypanosoma cruzi (strain CL Brener)).